A 1006-amino-acid chain; its full sequence is Unconventional myosin-Id (1006 aa).

The residue at position 2 (Ala-2) is an N-acetylalanine. Residues 9–695 enclose the Myosin motor domain; that stretch reads FGKADFVLMD…TLFTLEELRA (687 aa). 102–109 is an ATP binding site; it reads GESGAGKT. Ser-200 carries the phosphoserine modification. Tyr-536 carries the post-translational modification Phosphotyrosine. Residues 572–594 are actin-binding; it reads MIALVDNLASKEPYYVRCIKPND. IQ domains follow at residues 699–719 and 721–741; these read VRVVLFLQKVWRGTLARMRYK and TKAALTIIRYYRRYKVKSYIH. The tract at residues 776–896 is interaction with calmodulin; it reads LQSIFNRWRA…MDPTKQYKVM (121 aa). The 194-residue stretch at 812–1005 folds into the TH1 domain; it reads GQRADLGLQR…RSGFILSVPG (194 aa).

This sequence belongs to the TRAFAC class myosin-kinesin ATPase superfamily. Myosin family. As to quaternary structure, interacts (via the two IQ motifs) with calmodulin. Binds an additional calmodulin chain via a third, C-terminal region. Interacts with F-actin. As to expression, detected on tracheal epithelial cells, and on epithelial cells and brush border cells in duodenum, jejunum and ileum. Detected on myelinated white matter in the cerebellum, and the myelinated part of the optic nerve. Detected on mature oligodendrocites. Detected on the outside of the myelin sheet that surrounds axons (at protein level). Ubiquitous. Highest levels in adult brain, and spinal cord. Moderate levels in lung, kidney, liver and spleen. Low levels in testis and heart (at protein level).

The protein resides in the cytoplasm. It is found in the perikaryon. It localises to the cell projection. The protein localises to the dendrite. Its subcellular location is the early endosome. The protein resides in the cell cortex. In terms of biological role, unconventional myosin that functions as actin-based motor protein with ATPase activity. Plays a role in endosomal protein trafficking, and especially in the transfer of cargo proteins from early to recycling endosomes. Required for normal planar cell polarity in ciliated tracheal cells, for normal rotational polarity of cilia, and for coordinated, unidirectional ciliary movement in the trachea. Required for normal, polarized cilia organization in brain ependymal epithelial cells. In Rattus norvegicus (Rat), this protein is Unconventional myosin-Id (Myo1d).